The sequence spans 336 residues: Holliday junction branch migration complex subunit RuvB (336 aa).

Residues 4 to 184 are large ATPase domain (RuvB-L); sequence ADRLISASGG…FGIVQRLEFY (181 aa). ATP contacts are provided by residues Ile-23, Arg-24, Gly-65, Lys-68, Thr-69, Thr-70, 131-133, Arg-174, Tyr-184, and Arg-221; that span reads EDY. Thr-69 provides a ligand contact to Mg(2+). The interval 185–255 is small ATPAse domain (RuvB-S); that stretch reads NVKDLTDIVA…IAARAMDMLD (71 aa). The interval 258 to 336 is head domain (RuvB-H); it reads NEGFDFMDRK…HFGLQRPDEG (79 aa). The DNA site is built by Arg-313 and Arg-318.

It belongs to the RuvB family. Homohexamer. Forms an RuvA(8)-RuvB(12)-Holliday junction (HJ) complex. HJ DNA is sandwiched between 2 RuvA tetramers; dsDNA enters through RuvA and exits via RuvB. An RuvB hexamer assembles on each DNA strand where it exits the tetramer. Each RuvB hexamer is contacted by two RuvA subunits (via domain III) on 2 adjacent RuvB subunits; this complex drives branch migration. In the full resolvosome a probable DNA-RuvA(4)-RuvB(12)-RuvC(2) complex forms which resolves the HJ.

Its subcellular location is the cytoplasm. The catalysed reaction is ATP + H2O = ADP + phosphate + H(+). In terms of biological role, the RuvA-RuvB-RuvC complex processes Holliday junction (HJ) DNA during genetic recombination and DNA repair, while the RuvA-RuvB complex plays an important role in the rescue of blocked DNA replication forks via replication fork reversal (RFR). RuvA specifically binds to HJ cruciform DNA, conferring on it an open structure. The RuvB hexamer acts as an ATP-dependent pump, pulling dsDNA into and through the RuvAB complex. RuvB forms 2 homohexamers on either side of HJ DNA bound by 1 or 2 RuvA tetramers; 4 subunits per hexamer contact DNA at a time. Coordinated motions by a converter formed by DNA-disengaged RuvB subunits stimulates ATP hydrolysis and nucleotide exchange. Immobilization of the converter enables RuvB to convert the ATP-contained energy into a lever motion, pulling 2 nucleotides of DNA out of the RuvA tetramer per ATP hydrolyzed, thus driving DNA branch migration. The RuvB motors rotate together with the DNA substrate, which together with the progressing nucleotide cycle form the mechanistic basis for DNA recombination by continuous HJ branch migration. Branch migration allows RuvC to scan DNA until it finds its consensus sequence, where it cleaves and resolves cruciform DNA. This Aeromonas hydrophila subsp. hydrophila (strain ATCC 7966 / DSM 30187 / BCRC 13018 / CCUG 14551 / JCM 1027 / KCTC 2358 / NCIMB 9240 / NCTC 8049) protein is Holliday junction branch migration complex subunit RuvB.